The following is a 246-amino-acid chain: uncharacterized protein (246 aa).

Basic residues-rich tracts occupy residues 1 to 10 (MVWRFQKHIG) and 79 to 97 (TRRRGAGQRHCNQKPKAGR). Residues 1–184 (MVWRFQKHIG…LPPAHVPPTL (184 aa)) are disordered. A compositionally biased stretch (pro residues) spans 158–180 (PPFPPPPPPGDPTPPSPLPPAHV).

This is an uncharacterized protein from Homo sapiens (Human).